A 192-amino-acid chain; its full sequence is Peptidyl-tRNA hydrolase (192 aa).

Residue tyrosine 17 coordinates tRNA. The active-site Proton acceptor is the histidine 22. TRNA-binding residues include tyrosine 68, asparagine 70, and asparagine 116.

It belongs to the PTH family. In terms of assembly, monomer.

Its subcellular location is the cytoplasm. It catalyses the reaction an N-acyl-L-alpha-aminoacyl-tRNA + H2O = an N-acyl-L-amino acid + a tRNA + H(+). Functionally, hydrolyzes ribosome-free peptidyl-tRNAs (with 1 or more amino acids incorporated), which drop off the ribosome during protein synthesis, or as a result of ribosome stalling. In terms of biological role, catalyzes the release of premature peptidyl moieties from peptidyl-tRNA molecules trapped in stalled 50S ribosomal subunits, and thus maintains levels of free tRNAs and 50S ribosomes. This is Peptidyl-tRNA hydrolase from Mycolicibacterium vanbaalenii (strain DSM 7251 / JCM 13017 / BCRC 16820 / KCTC 9966 / NRRL B-24157 / PYR-1) (Mycobacterium vanbaalenii).